We begin with the raw amino-acid sequence, 1012 residues long: MVQAPMISVPLKATSEIDWVAPLKNYIRNTYGDDPERYAEECATLNRLRQDMRGAGKDSTSGRDLLYRYYGQLELLDLRFPVDEKNIKISFTWFDAFTHKPTAQYSLAFEKASIIFNISAVLSCHAAHQLRTEEAGLKTAYHSFQASAGMFTYINENFLHAPSSDLSRETVKTLISIMLAQAQEVFLEKQIADQKKNGLLAKLSSQAAALYAQAVEGVQENVTKAIFEKVWLSVVQIKLNFMNSLAQYYQALADEDANSYGVAIARLEIAQGLAKEANKMAHSFPTSVPPNSNLTSDCGHILADATKRHLATVKEKLEELNKENDMIYHQPVPAEASVAPVPKLPAAKPIPVSELYAGQDIQRITGPDLFAKIVPLAVTESASLYDEEKAKLVRAETERVETANSEMAASLDYLRLPGALQVLKGGFDQDILPDEDFRTWCVDVADHESPHRIFEYLHTEKQAISTILDKSSRQLDMEESVCEKMRSKYDAEWTQQPSSRLTTTLRTDIRRYREALEVAAKSDGQLATKLRANETELDEMRQAAQHGEIDELFQRAVRKSRKSNPNSPATVEPNLLEADFDDGGPSVVEQIQKVEDILKKLSLVKKERLQVLQDLKQKAHSDDISQILILNKKSIANYEQQLFQQELEKFRPHQNRLVQASHKQAALMRELTVTFNNLLQDKRVRADQSRYESVQRSRTSVINKYKRAYQEFLDLEAGLQSAKNWYKDMRQEAESLEKNVEAFVNNRRAEGAQLLNQIEQDRAANKSSHAALEQERLKNLMERMSMDPSPTSPKPSSGSGGRPTPAPLSFAPAAVSNTPLSAYQKSNFSTQYPASPPATQVPHNPGGQQQTPYQQYNPSSLGRIPGPASPPPNQTSFNIGPGRHPASPPPTQTSFAQSRPYSLTTYGNPSALNPQGGQPQQSQPGGYVPPGFVPPPPPPGPPPLGPQQTVHYGGNEYYAGAMGNPNIGRPGSGQQGPQGQQGGWGQPPPQQQLYQQQGGGGGDPWAGLSAWK.

In terms of domain architecture, BRO1 spans 5–407 (PMISVPLKAT…ERVETANSEM (403 aa)). Residues 301-330 (ILADATKRHLATVKEKLEELNKENDMIYHQ) are a coiled coil. Residues 558 to 578 (RKSRKSNPNSPATVEPNLLEA) form a disordered region. A coiled-coil region spans residues 719 to 775 (LQSAKNWYKDMRQEAESLEKNVEAFVNNRRAEGAQLLNQIEQDRAANKSSHAALEQE). Disordered regions lie at residues 784–812 (MSMD…SFAP) and 827–1012 (NFST…SAWK). The segment covering 827-842 (NFSTQYPASPPATQVP) has biased composition (polar residues). The segment covering 844–857 (NPGGQQQTPYQQYN) has biased composition (low complexity). A compositionally biased stretch (polar residues) spans 892–913 (QTSFAQSRPYSLTTYGNPSALN). A compositionally biased stretch (low complexity) spans 914–930 (PQGGQPQQSQPGGYVPP). Residues 931–945 (GFVPPPPPPGPPPLG) show a composition bias toward pro residues. Gly residues predominate over residues 970-985 (PGSGQQGPQGQQGGWG).

The protein belongs to the BRO1 family.

The protein resides in the cytoplasm. It is found in the endosome. Functionally, involved in concentration and sorting of cargo proteins of the multivesicular body (MVB) for incorporation into intralumenal vesicles. This is Vacuolar protein-sorting protein bro-1 (bro-1) from Neurospora crassa (strain ATCC 24698 / 74-OR23-1A / CBS 708.71 / DSM 1257 / FGSC 987).